The primary structure comprises 541 residues: Acyl-CoA ligase M9 (541 aa).

186–197 (AMSTSGTTGLPK) lines the AMP pocket. The AMP-binding stretch occupies residues 445 to 519 (ELEAVLHQMP…DSLPRNSSGK (75 aa)).

Belongs to the ATP-dependent AMP-binding enzyme family.

It functions in the pathway secondary metabolite biosynthesis. In terms of biological role, acyl-CoA ligase; part of the gene cluster that mediates the biosynthesis of squalestatin S1 (SQS1, also known as zaragozic acid A), a heavily oxidized fungal polyketide that offers potent cholesterol lowering activity by targeting squalene synthase (SS). SQS1 is composed of a 2,8-dioxobicyclic[3.2.1]octane-3,4,5-tricarboxyclic acid core that is connected to two lipophilic polyketide arms. These initial steps feature the priming of an unusual benzoic acid starter unit onto the highly reducing polyketide synthase pks2, followed by oxaloacetate extension and product release to generate a tricarboxylic acid containing product. The phenylalanine ammonia lyase (PAL) M7 and the acyl-CoA ligase M9 are involved in transforming phenylalanine into benzoyl-CoA. The citrate synthase-like protein R3 is involved in connecting the C-alpha-carbons of the hexaketide chain and oxaloacetate to afford the tricarboxylic acid unit. The potential hydrolytic enzymes, M8 and M10, are in close proximity to pks2 and may participate in product release. On the other side, the tetraketide arm is synthesized by a the squalestatin tetraketide synthase pks1 and enzymatically esterified to the core in the last biosynthetic step, by the acetyltransferase M4. The biosynthesis of the tetraketide must involve 3 rounds of chain extension. After the first and second rounds methyl-transfer occurs, and in all rounds of extension the ketoreductase and dehydratase are active. The enoyl reductase and C-MeT of pks1 are not active in the final round of extension. The acetyltransferase M4 appears to have a broad substrate selectivity for its acyl CoA substrate, allowing the in vitro synthesis of novel squalestatins. The biosynthesis of SQS1 requires several oxidative steps likely performed by oxidoreductases M1, R1 and R2. Finally, in support of the identification of the cluster as being responsible for SQS1 production, the cluster contains a gene encoding a putative squalene synthase (SS) R6, suggesting a likely mechanism for self-resistance. The polypeptide is Acyl-CoA ligase M9 (Phoma sp. (strain ATCC 20986 / MF5453)).